The primary structure comprises 2036 residues: Transmembrane channel-like protein (2036 aa).

Disordered regions lie at residues 1–178 (MQND…IDDE) and 194–243 (SVRG…ESTQ). The Cytoplasmic portion of the chain corresponds to 1–353 (MQNDEEPAAA…GVASYFTFLR (353 aa)). Residues 58-73 (VGSSSSNGNTSNVATG) are compositionally biased toward low complexity. The segment covering 74-90 (ANSENNSGVTSPHQLSV) has biased composition (polar residues). A compositionally biased stretch (basic and acidic residues) spans 125 to 134 (ASQEDHRSYE). Positions 166-178 (FDEDGGGGDIDDE) are enriched in acidic residues. Over residues 198–208 (YRGKRGSRSSR) the composition is skewed to basic residues. The span at 216 to 225 (HVLDSVERRR) shows a compositional bias: basic and acidic residues. The segment covering 227 to 243 (SVYTTSSEEGTNQESTQ) has biased composition (polar residues). A helical membrane pass occupies residues 354 to 374 (WLMWVNIMIAIPLVAFVIGPE). At 375–395 (YFATKHGETDPRKRMSDPEAR) the chain is on the extracellular side. A helical membrane pass occupies residues 396 to 418 (VAGNLFTFWEFEGYLKYSPMFYG). Residues 419–432 (YYSSTSGISTSGYK) lie on the Cytoplasmic side of the membrane. The chain crosses the membrane as a helical span at residues 433-453 (LPLAYFLTAVLVYIYSFVATL). Topologically, residues 454-526 (RKMAENSRNS…NRNWRVILQR (73 aa)) are extracellular. Residues 527-547 (ILVNILVMGLLGLSGATVVLL) traverse the membrane as a helical segment. The Cytoplasmic portion of the chain corresponds to 548–567 (VNHSEDLAKHDNWLSRNAVN). Residues 568–588 (VTMTLLSFFLPMIFEALGLFE) form a helical membrane-spanning segment. Residues 589 to 599 (NWHPRQQLRLQ) are Extracellular-facing. The helical transmembrane segment at 600–620 (LARIMILNMLNLYSLMFSFIY) threads the bilayer. Over 621 to 1308 (KINSKEKPLQ…ILTLINNQGQ (688 aa)) the chain is Cytoplasmic. 5 disordered regions span residues 789 to 839 (TTAT…TEAT), 860 to 967 (KPLG…TDQA), 996 to 1027 (FFTSKYSRRHRNESAVSAGQPRETTESVNATP), 1066 to 1143 (LRGR…EGSE), and 1186 to 1205 (GSTTESPDSTTQSSDSKQLT). The span at 870 to 885 (IPNSTTNSATLSTIPA) shows a compositional bias: polar residues. Residues 886-906 (TLNTTNLPLNSTTKLTTTTST) are compositionally biased toward low complexity. Polar residues predominate over residues 933 to 952 (TSDAPDNNSYSDITDYSSEP). Positions 953–967 (SEIEDFDEQESTDQA) are enriched in acidic residues. Low complexity-rich tracts occupy residues 1069 to 1083 (RITTTTSTSTTSTTT), 1091 to 1100 (RTTTTELTST), and 1107 to 1130 (TTESSTDSSSPGSTTNAFDSSSST). The helical transmembrane segment at 1309-1329 (VWMGIFFSPGLVLINLVKLMI) threads the bilayer. Topologically, residues 1330 to 1358 (MMYFRSWIVLTCNVPHEVVFKASKSNNFY) are extracellular. A helical transmembrane segment spans residues 1359–1379 (LSLLLTMLFLCVLPVGYAIVW). At 1380–1423 (LRPSWHCGPFSEYNRIAEFITNTTRNALPKQLHEPLDYLTSSST) the chain is on the cytoplasmic side. A helical transmembrane segment spans residues 1424-1444 (VIPLLLLLILIIYYLVSLTGA). Topologically, residues 1445 to 2036 (LREANQDLRT…RIDIENEHEK (592 aa)) are extracellular. Disordered stretches follow at residues 1527–1572 (LRKG…SRLQ), 1592–1841 (ERAR…SRQG), and 1859–1990 (KKDD…IPTI). 5 stretches are compositionally biased toward basic and acidic residues: residues 1538 to 1566 (SFVRRDDDDTDTEHQDSLPHDEEAKDKRF), 1614 to 1640 (KETHPKSRFKVEKHERKDRGSMKDKKD), 1658 to 1668 (SPKDNEHDPDT), 1727 to 1743 (HIVDEKKPPPHEVEDKP), and 1777 to 1793 (PEPEVFKFDERSVERSS). Positions 1806–1838 (NEPSGTEEQDRSLPSPTPSQGQGHHQRQLSVLS) are enriched in polar residues. The span at 1890 to 1899 (VLSSVSSSTA) shows a compositional bias: low complexity. Positions 1903-1914 (PPTPEPESPTPS) are enriched in pro residues. Residues 1976–1990 (QDSQSSIWSDNIPTI) are compositionally biased toward polar residues.

It belongs to the TMC family. As to expression, expressed in multi-dendritic neurons of the labellum (md-L), which extend elaborate dendritic arbors innervating the bases of taste hairs (at protein level). In larvae, expressed in class I and class II dendritic arborization (da) neurons and bipolar dendrite (bd) neurons (at protein level). In adults, expressed in various sensory neurons including those in the mouth parts, olfactory neurons in the antenna, wing bristle neurons, haltere neurons, arista neurons, and many other sensory neurons, including a subset of chordotonal (Cho) neurons. Expressed in md-L axon terminals, including those that project into the subesophageal zone (SEZ). Also expressed in a small number of local neurons in the adult ventral nerve cord (VNC), and projections extending from a few neurons in the legs or wing hinges. In the adult mouth, expressed in a few multi-dendritic neurons of the ventral cibarial sensory organ (VCSO); the multiple elaborate dendritic branches form a brush-like structure that faces the luminal side of the food-passing tunnel. Also expressed in the oviduct and uterus of adult females.

It is found in the cell membrane. Its subcellular location is the cell projection. The protein resides in the dendrite. Probable ion channel. Component of mechanosensitive neurons that participates in proprioception, sensing food texture, and directing egg-laying site selection (oviposition). Component of multi-dendritic neurons of the labellum (md-L) where it is required for sensing the hardness and viscosity of their food, enabling them to behaviorally discriminate their preferred softness and smoothness from harder and stickier food options. Required as part of oviposition site selection process to relay mechanosensory and chemosensory information on the hardness and sweetness of potential egg-laying substrates, thus ensuring females select the most optimal site for their eggs survival. Females determine the softest substrate for their eggs first by making a coarse evaluation of substrate hardness using mechanosensitive channels nan and Piezo in the leg tarsal bristles, followed by a much finer assessment using nan, iav and Tmc mechanosensitive channels on the labellum. This protein is required to sense subtle differences in substrate stiffness (between 0.25% and 0.3% agarose), likely acting in the md-L neurons. Also required in neurons on the labellum, including the md-Ls, and possibly in the brain, to inhibit discrimination of egg-laying substrates of different hardness if the substrate contains sucrose. During oviposition evaluation, activation of sweet neurons by sucrose enhances the activity of the Tmc neurons resulting in females losing their softness preference in favor of egg-laying sites that contain sucrose. Acts in the larvae peripheral sensory neurons, to contribute to proprioception and sensory feedback for normal forward crawling behavior. Required for the normal activity of the proprioceptive sensory dendrites, ddaE which show preferential responses to forward locomotion, and ddaD which show preferential responses to backward locomotion. This chain is Transmembrane channel-like protein, found in Drosophila melanogaster (Fruit fly).